We begin with the raw amino-acid sequence, 619 residues long: ATP-dependent zinc metalloprotease FtsH (619 aa).

Topologically, residues 1 to 11 (MSNTDPQPPQK) are cytoplasmic. The chain crosses the membrane as a helical span at residues 12–32 (LPLNWVVWTLAVALMLYYLPA). Topologically, residues 33-120 (MRDRPEPAIK…EVKEGHDASS (88 aa)) are periplasmic. A helical transmembrane segment spans residues 121–141 (SKVILLSYLPWIMFMIILFWL). At 142-619 (SRRTFRNFSG…IDECLQTGAS (478 aa)) the chain is on the cytoplasmic side. 216 to 223 (GPPGTGKT) lines the ATP pocket. H437 contacts Zn(2+). The active site involves E438. Positions 441 and 513 each coordinate Zn(2+).

In the central section; belongs to the AAA ATPase family. It in the C-terminal section; belongs to the peptidase M41 family. As to quaternary structure, homohexamer. Requires Zn(2+) as cofactor.

It localises to the cell inner membrane. Functionally, acts as a processive, ATP-dependent zinc metallopeptidase for both cytoplasmic and membrane proteins. Plays a role in the quality control of integral membrane proteins. The sequence is that of ATP-dependent zinc metalloprotease FtsH from Hahella chejuensis (strain KCTC 2396).